We begin with the raw amino-acid sequence, 98 residues long: NADH-ubiquinone oxidoreductase chain 4L (98 aa).

The next 3 membrane-spanning stretches (helical) occupy residues 2–22 (PPIFTNVILAFATAFLGTLIF), 29–49 (SLLCLEGMMLSLFILSTLIIL), and 61–81 (ILLLVFAACEAAIGLALLVMV).

It belongs to the complex I subunit 4L family. Core subunit of respiratory chain NADH dehydrogenase (Complex I) which is composed of 45 different subunits.

The protein resides in the mitochondrion inner membrane. The enzyme catalyses a ubiquinone + NADH + 5 H(+)(in) = a ubiquinol + NAD(+) + 4 H(+)(out). Its function is as follows. Core subunit of the mitochondrial membrane respiratory chain NADH dehydrogenase (Complex I) which catalyzes electron transfer from NADH through the respiratory chain, using ubiquinone as an electron acceptor. Part of the enzyme membrane arm which is embedded in the lipid bilayer and involved in proton translocation. The polypeptide is NADH-ubiquinone oxidoreductase chain 4L (MT-ND4L) (Avahi occidentalis (Western woolly lemur)).